We begin with the raw amino-acid sequence, 500 residues long: ADP,ATP carrier protein 5 (500 aa).

Helical transmembrane passes span Leu-26–Leu-46, Ile-62–Tyr-82, Ile-94–Tyr-114, Tyr-149–Trp-169, Phe-184–Met-204, Ile-224–Leu-244, Leu-287–Val-307, Leu-328–Met-348, Ala-357–Phe-377, Ile-381–Gly-401, and Ser-469–Val-489.

Belongs to the ADP/ATP translocase tlc family.

It localises to the cell membrane. Its function is as follows. Provides the rickettsial cell with host ATP in exchange for rickettsial ADP. This is an obligate exchange system. This energy acquiring activity is an important component of rickettsial parasitism. The sequence is that of ADP,ATP carrier protein 5 (tlcE) from Rickettsia prowazekii (strain Madrid E).